A 336-amino-acid chain; its full sequence is 3-isopropylmalate dehydrogenase (336 aa).

Substrate-binding residues include arginine 87, arginine 97, arginine 121, and aspartate 211. Residues aspartate 211, aspartate 235, and aspartate 239 each contribute to the Mg(2+) site. 271-283 contributes to the NAD(+) binding site; the sequence is GSAPDIAGQGVAD.

This sequence belongs to the isocitrate and isopropylmalate dehydrogenases family. LeuB type 2 subfamily. In terms of assembly, homodimer. Mg(2+) is required as a cofactor. The cofactor is Mn(2+).

The protein localises to the cytoplasm. The catalysed reaction is (2R,3S)-3-isopropylmalate + NAD(+) = 4-methyl-2-oxopentanoate + CO2 + NADH. Its pathway is amino-acid biosynthesis; L-leucine biosynthesis; L-leucine from 3-methyl-2-oxobutanoate: step 3/4. Its function is as follows. Catalyzes the oxidation of 3-carboxy-2-hydroxy-4-methylpentanoate (3-isopropylmalate) to 3-carboxy-4-methyl-2-oxopentanoate. The product decarboxylates to 4-methyl-2 oxopentanoate. The chain is 3-isopropylmalate dehydrogenase from Mycobacterium avium (strain 104).